The sequence spans 358 residues: Phospho-N-acetylmuramoyl-pentapeptide-transferase (358 aa).

10 consecutive transmembrane segments (helical) span residues 25 to 45 (RTIY…PWVI), 73 to 93 (TMGG…WADL), 97 to 117 (YVWT…TDDY), 134 to 154 (MFWQ…VAGM), 172 to 192 (YLYI…VNLT), 197 to 217 (GLAI…AYIA), 233 to 253 (GAGE…GFLW), 261 to 281 (VFMG…LAVI), 286 to 306 (MLLV…IFQV), and 335 to 355 (KIIV…ISTL).

Belongs to the glycosyltransferase 4 family. MraY subfamily. The cofactor is Mg(2+).

Its subcellular location is the cell inner membrane. It catalyses the reaction UDP-N-acetyl-alpha-D-muramoyl-L-alanyl-gamma-D-glutamyl-meso-2,6-diaminopimeloyl-D-alanyl-D-alanine + di-trans,octa-cis-undecaprenyl phosphate = di-trans,octa-cis-undecaprenyl diphospho-N-acetyl-alpha-D-muramoyl-L-alanyl-D-glutamyl-meso-2,6-diaminopimeloyl-D-alanyl-D-alanine + UMP. Its pathway is cell wall biogenesis; peptidoglycan biosynthesis. In terms of biological role, catalyzes the initial step of the lipid cycle reactions in the biosynthesis of the cell wall peptidoglycan: transfers peptidoglycan precursor phospho-MurNAc-pentapeptide from UDP-MurNAc-pentapeptide onto the lipid carrier undecaprenyl phosphate, yielding undecaprenyl-pyrophosphoryl-MurNAc-pentapeptide, known as lipid I. The sequence is that of Phospho-N-acetylmuramoyl-pentapeptide-transferase from Geobacter sulfurreducens (strain ATCC 51573 / DSM 12127 / PCA).